Consider the following 205-residue polypeptide: MAAARPSLGRVLPGSSVLFLCDMQEKFRHNIAYFPQIVSVAARMLKVARLLEVPVMLTEQYPQGLGPTVPELGTEGLRPLAKTCFSMVPALQQELDSRPQLRSVLLCGIEAQACILNTTLDLLDRGLQVHVVVDACSSRSQVDRLVALARMRQSGAFLSTSEGLILQLVGDAVHPQFKEIQKLIKEPAPDSGLLGLFQGQNSLLH.

Phosphoserine occurs at positions 7 and 202.

The protein belongs to the isochorismatase family. As to quaternary structure, interacts with CDKN2A.

It is found in the cytoplasm. It localises to the nucleus. This Homo sapiens (Human) protein is Isochorismatase domain-containing protein 2 (ISOC2).